The sequence spans 155 residues: Small ribosomal subunit protein uS7cz/uS7cy (155 aa).

The protein belongs to the universal ribosomal protein uS7 family. In terms of assembly, part of the 30S ribosomal subunit.

The protein resides in the plastid. Its subcellular location is the chloroplast. In terms of biological role, one of the primary rRNA binding proteins, it binds directly to 16S rRNA where it nucleates assembly of the head domain of the 30S subunit. In Eucalyptus globulus subsp. globulus (Tasmanian blue gum), this protein is Small ribosomal subunit protein uS7cz/uS7cy (rps7-A).